A 124-amino-acid polypeptide reads, in one-letter code: Small ribosomal subunit protein uS12 (124 aa).

Aspartate 89 carries the post-translational modification 3-methylthioaspartic acid.

Belongs to the universal ribosomal protein uS12 family. In terms of assembly, part of the 30S ribosomal subunit. Contacts proteins S8 and S17. May interact with IF1 in the 30S initiation complex.

In terms of biological role, with S4 and S5 plays an important role in translational accuracy. Interacts with and stabilizes bases of the 16S rRNA that are involved in tRNA selection in the A site and with the mRNA backbone. Located at the interface of the 30S and 50S subunits, it traverses the body of the 30S subunit contacting proteins on the other side and probably holding the rRNA structure together. The combined cluster of proteins S8, S12 and S17 appears to hold together the shoulder and platform of the 30S subunit. This chain is Small ribosomal subunit protein uS12, found in Hamiltonella defensa subsp. Acyrthosiphon pisum (strain 5AT).